Here is a 341-residue protein sequence, read N- to C-terminus: Geranylgeranyl transferase type-2 subunit beta (341 aa).

PFTB repeat units follow at residues 15–55 (KSKH…ITMN), 62–104 (QQDV…KIYD), 122–163 (RERL…SLLN), 170–211 (ADTA…AIMN), 223–264 (VKLI…SILK), and 271–313 (LKIL…SLID). Geranylgeranyl diphosphate-binding positions include 196-198 (HAA) and 243-255 (RPEK…YSWW). Asp249, Cys251, and His301 together coordinate Zn(2+).

This sequence belongs to the protein prenyltransferase subunit beta family. As to quaternary structure, heterodimer of an alpha and a beta subunit. Requires Zn(2+) as cofactor.

It catalyses the reaction geranylgeranyl diphosphate + L-cysteinyl-[protein] = S-geranylgeranyl-L-cysteinyl-[protein] + diphosphate. Catalyzes the transfer of a geranyl-geranyl moiety from geranyl-geranyl pyrophosphate to proteins having the C-terminal -XCC or -XCXC, where both cysteines may become modified. Acts on YPT1 and SEC4. The protein is Geranylgeranyl transferase type-2 subunit beta (BET2) of Candida albicans (Yeast).